The primary structure comprises 896 residues: NEDD4-binding protein 1 (896 aa).

The region spanning 59–143 is the KH-like domain; sequence QEAVHSAKEY…IQQFVKLFEN (85 aa). Residue serine 226 is modified to Phosphoserine. Residue threonine 242 is modified to Phosphothreonine. A phosphoserine mark is found at serine 258 and serine 300. 2 disordered regions span residues 403–430 and 488–507; these read YPET…PKKT and ETDG…VNFV. Residues 414 to 430 show a composition bias toward polar residues; that stretch reads VYSSTNELTTDSTPKKT. Serine 562 is subject to Phosphoserine. Residues 617–769 form the RNase NYN domain; it reads LKHIVIDGSN…LGRSGPRLEE (153 aa). The segment at 801 to 821 is disordered; it reads GTQAASTSHQPPTRIQGAPSS. Residues 803-813 are compositionally biased toward polar residues; it reads QAASTSHQPPT. A coCUN region spans residues 849 to 896; sequence RSSAETNELREALLKIFPDSEQRLKIDQILVAHPYMKDLNALSAMVLD.

It belongs to the N4BP1 family. As to quaternary structure, interacts with NEDD4. Interacts with ITCH (via WW domain 2). In terms of processing, proteolytically cleaved by CASP8 downstream of TLR3 or TLR4, leading to its inactivation. Mainly cleaved at Asp-490 by CASP8. Cleaved by caspase-like protein MALT1 in T-cells following TCR-mediated activation, leading to its inactivation and subsequent viral reactivation during HIV-1 infection. Mono- and polyubiquitinated on the CoCUN region. Monoubiquitinated by NEDD4. Polyubiquitinated, leading to its degradation by the proteasome. Sumoylated with SUMO1, abrogating polyubiquitination and subsequent degradation. Desumoylated by SENP1, leading to accumulation in PML nuclear bodies. Detected in heart, lung, brain, liver, skeletal muscle, pancreas, kidney, spleen, testis and ovary.

Its subcellular location is the cytoplasm. It is found in the cytosol. It localises to the nucleus. The protein localises to the nucleolus. The protein resides in the PML body. Its activity is regulated as follows. Proteolytic cleavage by CASP8 or MALT1 leads to its inactivation. Its function is as follows. Potent suppressor of cytokine production that acts as a regulator of innate immune signaling and inflammation. Acts as a key negative regulator of select cytokine and chemokine responses elicited by TRIF-independent Toll-like receptors (TLRs), thereby limiting inflammatory cytokine responses to minor insults. In response to more threatening pathogens, cleaved by CASP8 downstream of TLR3 or TLR4, leading to its inactivation, thereby allowing production of inflammatory cytokines. Acts as a restriction factor against some viruses, such as HIV-1: restricts HIV-1 replication by binding to HIV-1 mRNAs and mediating their degradation via its ribonuclease activity. Also acts as an inhibitor of the E3 ubiquitin-protein ligase ITCH: acts by interacting with the second WW domain of ITCH, leading to compete with ITCH's substrates and impairing ubiquitination of substrates. This chain is NEDD4-binding protein 1, found in Homo sapiens (Human).